The primary structure comprises 420 residues: Mitogen-activated protein kinase HOG2 (420 aa).

Residues 29 to 37 (VGMGAFGLV) and Lys52 contribute to the ATP site. Residue Asp144 is the Proton acceptor of the active site. Thr174 bears the Phosphothreonine mark. The short motif at 174-176 (TGY) is the TXY element. Residue Tyr176 is modified to Phosphotyrosine. The disordered stretch occupies residues 372 to 394 (AQHHHQTQQQSSGKHTNPTTSSS).

It belongs to the protein kinase superfamily. Ser/Thr protein kinase family. MAP kinase subfamily. HOG1 sub-subfamily. It depends on Mg(2+) as a cofactor. Dually phosphorylated on Thr-174 and Tyr-176, which activates the enzyme.

The protein localises to the cytoplasm. It is found in the nucleus. The enzyme catalyses L-seryl-[protein] + ATP = O-phospho-L-seryl-[protein] + ADP + H(+). It catalyses the reaction L-threonyl-[protein] + ATP = O-phospho-L-threonyl-[protein] + ADP + H(+). Activated by tyrosine and threonine phosphorylation. In terms of biological role, mitogen-activated protein kinase involved in a signal transduction pathway that is activated by changes in the osmolarity of the extracellular environment. Controls osmotic regulation of transcription of target genes. The polypeptide is Mitogen-activated protein kinase HOG2 (HOG2) (Zygosaccharomyces rouxii).